Reading from the N-terminus, the 1058-residue chain is Protein translocase subunit SECA2, chloroplastic (1058 aa).

A chloroplast-targeting transit peptide spans 1 to 58; it reads MGSVSNLVSPNICHPAPPCLTSRSNKFPWTKPISGLLFYRSVTPIKRCHLVRRSCVVS. An ATP-binding site is contributed by 167 to 174; sequence MKTGEGKT.

The protein belongs to the SecA family. As to quaternary structure, part of a second Sec protein translocation apparatus. Interacts probably with SCY2.

It localises to the plastid. The protein localises to the chloroplast membrane. It catalyses the reaction ATP + H2O + chloroplast-proteinSide 1 = ADP + phosphate + chloroplast-proteinSide 2.. Its function is as follows. Involved in protein export. Probably interacts with other proteins to allow the postimport or conservative sorting pathway for inner membrane proteins in plastids. May have a central role in coupling the hydrolysis of ATP to the transfer of proteins across the membrane. In Arabidopsis thaliana (Mouse-ear cress), this protein is Protein translocase subunit SECA2, chloroplastic.